We begin with the raw amino-acid sequence, 536 residues long: Phosphoenolpyruvate carboxykinase (ATP) (536 aa).

The substrate site is built by arginine 61, tyrosine 195, and lysine 201. Residues lysine 201, histidine 220, and 236-244 (GLSGTGKTT) each bind ATP. The Mn(2+) site is built by lysine 201 and histidine 220. Aspartate 257 is a Mn(2+) binding site. ATP contacts are provided by glutamate 285, arginine 322, and threonine 447. Arginine 322 contacts substrate.

This sequence belongs to the phosphoenolpyruvate carboxykinase (ATP) family. It depends on Mn(2+) as a cofactor.

It localises to the cytoplasm. The enzyme catalyses oxaloacetate + ATP = phosphoenolpyruvate + ADP + CO2. It participates in carbohydrate biosynthesis; gluconeogenesis. Its function is as follows. Involved in the gluconeogenesis. Catalyzes the conversion of oxaloacetate (OAA) to phosphoenolpyruvate (PEP) through direct phosphoryl transfer between the nucleoside triphosphate and OAA. The chain is Phosphoenolpyruvate carboxykinase (ATP) from Chelativorans sp. (strain BNC1).